The sequence spans 235 residues: Chromosome partition protein MukE (235 aa).

Positions 204-235 (QQEPSQSSLLDGFDADDTGHHDSELTMQEGEV) are disordered.

This sequence belongs to the MukE family. In terms of assembly, interacts, and probably forms a ternary complex, with MukF and MukB. The complex formation is stimulated by calcium or magnesium.

The protein resides in the cytoplasm. It localises to the nucleoid. Functionally, involved in chromosome condensation, segregation and cell cycle progression. May participate in facilitating chromosome segregation by condensation DNA from both sides of a centrally located replisome during cell division. Probably acts via its interaction with MukB and MukF. The sequence is that of Chromosome partition protein MukE from Photobacterium profundum (strain SS9).